A 435-amino-acid chain; its full sequence is Phosphomethylpyrimidine synthase (435 aa).

Residues asparagine 67, methionine 96, tyrosine 125, histidine 163, 185-187 (SRG), 226-229 (DGLR), and glutamate 265 each bind substrate. Histidine 269 contacts Zn(2+). Substrate is bound at residue tyrosine 292. Position 333 (histidine 333) interacts with Zn(2+). Cysteine 408, cysteine 411, and cysteine 415 together coordinate [4Fe-4S] cluster.

This sequence belongs to the ThiC family. It depends on [4Fe-4S] cluster as a cofactor.

The enzyme catalyses 5-amino-1-(5-phospho-beta-D-ribosyl)imidazole + S-adenosyl-L-methionine = 4-amino-2-methyl-5-(phosphooxymethyl)pyrimidine + CO + 5'-deoxyadenosine + formate + L-methionine + 3 H(+). It participates in cofactor biosynthesis; thiamine diphosphate biosynthesis. Its function is as follows. Catalyzes the synthesis of the hydroxymethylpyrimidine phosphate (HMP-P) moiety of thiamine from aminoimidazole ribotide (AIR) in a radical S-adenosyl-L-methionine (SAM)-dependent reaction. This Thermus thermophilus (strain ATCC 27634 / DSM 579 / HB8) protein is Phosphomethylpyrimidine synthase.